Here is a 120-residue protein sequence, read N- to C-terminus: SGSCAVRTCWKQLSSFHETGKLLKLKYETAVRVHSITNDATGETELISPKKHSYTLKNHIPRTTDLVYIEDSPNFCRPSKYSPGTAGRVCSKETNCESMCCGQGYNTQSLLVHRPCHCQV.

Ser1 carries O-palmitoleoyl serine; by PORCN lipidation. Cys90 and Cys101 form a disulfide bridge.

Belongs to the Wnt family. In terms of processing, palmitoleoylation is required for efficient binding to frizzled receptors. Depalmitoleoylation leads to Wnt signaling pathway inhibition.

Its subcellular location is the secreted. The protein localises to the extracellular space. The protein resides in the extracellular matrix. Its function is as follows. Ligand for members of the frizzled family of seven transmembrane receptors. Probable developmental protein. May be a signaling molecule which affects the development of discrete regions of tissues. Is likely to signal over only few cell diameters. The chain is Protein Wnt-9 (WNT-9) from Alopias vulpinus (Common thresher shark).